The primary structure comprises 115 residues: Large ribosomal subunit protein bL20 (115 aa).

Belongs to the bacterial ribosomal protein bL20 family.

Its function is as follows. Binds directly to 23S ribosomal RNA and is necessary for the in vitro assembly process of the 50S ribosomal subunit. It is not involved in the protein synthesizing functions of that subunit. This Cytophaga hutchinsonii (strain ATCC 33406 / DSM 1761 / CIP 103989 / NBRC 15051 / NCIMB 9469 / D465) protein is Large ribosomal subunit protein bL20.